Consider the following 178-residue polypeptide: Large ribosomal subunit protein uL6 (178 aa).

Belongs to the universal ribosomal protein uL6 family. In terms of assembly, part of the 50S ribosomal subunit.

Functionally, this protein binds to the 23S rRNA, and is important in its secondary structure. It is located near the subunit interface in the base of the L7/L12 stalk, and near the tRNA binding site of the peptidyltransferase center. The protein is Large ribosomal subunit protein uL6 of Corynebacterium urealyticum (strain ATCC 43042 / DSM 7109).